Here is a 179-residue protein sequence, read N- to C-terminus: Adenine phosphoribosyltransferase (179 aa).

The protein belongs to the purine/pyrimidine phosphoribosyltransferase family. Homodimer.

The protein resides in the cytoplasm. The catalysed reaction is AMP + diphosphate = 5-phospho-alpha-D-ribose 1-diphosphate + adenine. It participates in purine metabolism; AMP biosynthesis via salvage pathway; AMP from adenine: step 1/1. Functionally, catalyzes a salvage reaction resulting in the formation of AMP, that is energically less costly than de novo synthesis. This chain is Adenine phosphoribosyltransferase, found in Gluconobacter oxydans (strain 621H) (Gluconobacter suboxydans).